The primary structure comprises 318 residues: Deoxyhypusine hydroxylase (318 aa).

Residues His-65, Glu-66, His-98, and Glu-99 each coordinate Fe cation. HEAT-like PBS-type repeat units lie at residues Val-96–Glu-122, Tyr-194–Asp-220, Phe-225–Asn-251, and Val-258–Asp-284. Positions 227, 228, 260, and 261 each coordinate Fe cation.

This sequence belongs to the deoxyhypusine hydroxylase family. It depends on Fe(2+) as a cofactor.

The protein resides in the cytoplasm. It is found in the nucleus. It catalyses the reaction [eIF5A protein]-deoxyhypusine + AH2 + O2 = [eIF5A protein]-hypusine + A + H2O. The protein operates within protein modification; eIF5A hypusination. Its function is as follows. Catalyzes the hydroxylation of the N(6)-(4-aminobutyl)-L-lysine intermediate to form hypusine, an essential post-translational modification only found in mature eIF-5A factor. In Schizosaccharomyces pombe (strain 972 / ATCC 24843) (Fission yeast), this protein is Deoxyhypusine hydroxylase (lia1).